A 707-amino-acid polypeptide reads, in one-letter code: Elongation factor G (707 aa).

The 281-residue stretch at 8-288 (QFTRNIGIMA…AVCKFLPSPA (281 aa)) folds into the tr-type G domain. Residues 17–24 (AHIDAGKT), 85–89 (DTPGH), and 139–142 (NKMD) contribute to the GTP site. A disordered region spans residues 288 to 308 (ADTPTVEGTDPSDPNKVIERK).

This sequence belongs to the TRAFAC class translation factor GTPase superfamily. Classic translation factor GTPase family. EF-G/EF-2 subfamily.

The protein localises to the cytoplasm. In terms of biological role, catalyzes the GTP-dependent ribosomal translocation step during translation elongation. During this step, the ribosome changes from the pre-translocational (PRE) to the post-translocational (POST) state as the newly formed A-site-bound peptidyl-tRNA and P-site-bound deacylated tRNA move to the P and E sites, respectively. Catalyzes the coordinated movement of the two tRNA molecules, the mRNA and conformational changes in the ribosome. The polypeptide is Elongation factor G (Porphyromonas gingivalis (strain ATCC 33277 / DSM 20709 / CIP 103683 / JCM 12257 / NCTC 11834 / 2561)).